A 490-amino-acid chain; its full sequence is tRNA-2-methylthio-N(6)-dimethylallyladenosine synthase (490 aa).

In terms of domain architecture, MTTase N-terminal spans 37–154 (KKVYIATQGC…LPELYDKSTT (118 aa)). Residues Cys-46, Cys-83, Cys-117, Cys-198, Cys-202, and Cys-205 each contribute to the [4Fe-4S] cluster site. Residues 184–416 (KVEGYRAFVS…QKVIRDSTLK (233 aa)) form the Radical SAM core domain. Residues 419–487 (EEMVGKTLRV…PHMVRGELVD (69 aa)) enclose the TRAM domain.

The protein belongs to the methylthiotransferase family. MiaB subfamily. In terms of assembly, monomer. [4Fe-4S] cluster is required as a cofactor.

The protein resides in the cytoplasm. It carries out the reaction N(6)-dimethylallyladenosine(37) in tRNA + (sulfur carrier)-SH + AH2 + 2 S-adenosyl-L-methionine = 2-methylsulfanyl-N(6)-dimethylallyladenosine(37) in tRNA + (sulfur carrier)-H + 5'-deoxyadenosine + L-methionine + A + S-adenosyl-L-homocysteine + 2 H(+). Catalyzes the methylthiolation of N6-(dimethylallyl)adenosine (i(6)A), leading to the formation of 2-methylthio-N6-(dimethylallyl)adenosine (ms(2)i(6)A) at position 37 in tRNAs that read codons beginning with uridine. In Psychrobacter sp. (strain PRwf-1), this protein is tRNA-2-methylthio-N(6)-dimethylallyladenosine synthase.